A 324-amino-acid polypeptide reads, in one-letter code: IDS-like terpene synthase 1 (324 aa).

Mg(2+) contacts are provided by Asp-77 and Asp-81.

It belongs to the FPP/GGPP synthase family. Requires Mg(2+) as cofactor.

The catalysed reaction is (2E)-geranyl diphosphate = (E)-beta-ocimene + diphosphate. The enzyme catalyses (2E)-geranyl diphosphate + H2O = linalool + diphosphate. It catalyses the reaction (2E,6E)-farnesyl diphosphate = (3E,6E)-alpha-farnesene + diphosphate. It carries out the reaction (2E,6E,10E)-geranylgeranyl diphosphate = (E,E,E)-alpha-springene + diphosphate. Terpene synthase that shows monoterpene synthase activity and produces (E)-beta-ocimene as a major product and linalool as a minor product, using geranyl diphosphate (GPP) as substrate. Also shows sesquiterpene synthase activity as it is able to convert farnesyl diphosphate (FPP) into (E,E)-alpha-farnesene. Finally, TPS1 can convert geranylgeranyl diphosphate into (E,E,E)-alpha-springene. The protein is IDS-like terpene synthase 1 of Melampsora larici-populina (strain 98AG31 / pathotype 3-4-7) (Poplar leaf rust fungus).